Consider the following 150-residue polypeptide: Large ribosomal subunit protein bL9 (150 aa).

Belongs to the bacterial ribosomal protein bL9 family.

Its function is as follows. Binds to the 23S rRNA. The protein is Large ribosomal subunit protein bL9 of Limosilactobacillus fermentum (strain NBRC 3956 / LMG 18251) (Lactobacillus fermentum).